The primary structure comprises 120 residues: NAD(P)H-quinone oxidoreductase subunit 3, chloroplastic (120 aa).

The next 3 membrane-spanning stretches (helical) occupy residues 9–29 (IFWAFLIISSLIPILAFFLSG), 62–82 (YYMFALVFVVFDVETVFLYPW), and 88–108 (VLGVSVFIEAFIFVLILIVGL).

Belongs to the complex I subunit 3 family. In terms of assembly, NDH is composed of at least 16 different subunits, 5 of which are encoded in the nucleus.

The protein localises to the plastid. The protein resides in the chloroplast thylakoid membrane. The catalysed reaction is a plastoquinone + NADH + (n+1) H(+)(in) = a plastoquinol + NAD(+) + n H(+)(out). It catalyses the reaction a plastoquinone + NADPH + (n+1) H(+)(in) = a plastoquinol + NADP(+) + n H(+)(out). Its function is as follows. NDH shuttles electrons from NAD(P)H:plastoquinone, via FMN and iron-sulfur (Fe-S) centers, to quinones in the photosynthetic chain and possibly in a chloroplast respiratory chain. The immediate electron acceptor for the enzyme in this species is believed to be plastoquinone. Couples the redox reaction to proton translocation, and thus conserves the redox energy in a proton gradient. The chain is NAD(P)H-quinone oxidoreductase subunit 3, chloroplastic from Trachelium caeruleum (Blue throatwort).